Consider the following 117-residue polypeptide: MIIKKISNLVRKKRHLKLRKKIIGTNQKPRLNIFRSNKSFYIQLIDDEKRITLCSVHSKEVDSKGLNITTATKVGELIAQKALAQGIVNVVFDRGGFLYHGKIEALADASRRLGLKF.

It belongs to the universal ribosomal protein uL18 family. In terms of assembly, part of the 50S ribosomal subunit; part of the 5S rRNA/L5/L18/L25 subcomplex. Contacts the 5S and 23S rRNAs.

This is one of the proteins that bind and probably mediate the attachment of the 5S RNA into the large ribosomal subunit, where it forms part of the central protuberance. The polypeptide is Large ribosomal subunit protein uL18 (Phytoplasma mali (strain AT)).